Consider the following 214-residue polypeptide: tRNA (guanine-N(7)-)-methyltransferase (214 aa).

Residues E45, D70, N97, and N119 each coordinate S-adenosyl-L-methionine. Position 123 (K123) interacts with substrate. Residues 125 to 130 (RHNKRR) form an interaction with RNA region. Residues D155 and 193-196 (TEYE) contribute to the substrate site.

It belongs to the class I-like SAM-binding methyltransferase superfamily. TrmB family.

The enzyme catalyses guanosine(46) in tRNA + S-adenosyl-L-methionine = N(7)-methylguanosine(46) in tRNA + S-adenosyl-L-homocysteine. Its pathway is tRNA modification; N(7)-methylguanine-tRNA biosynthesis. Functionally, catalyzes the formation of N(7)-methylguanine at position 46 (m7G46) in tRNA. The polypeptide is tRNA (guanine-N(7)-)-methyltransferase (Clostridium novyi (strain NT)).